Consider the following 162-residue polypeptide: MPSFDIVSKVDPQTLDNALNVARKEITTRYDFRDSKTEIDLDKKASIIKVTTENSMRMNAIVDIVITRMAKQGIDAKALDMSKEEYASGPMVKRELPVKNGIDKESCKKIIKIIKDSGSKVTPAQMDDLIRVTGKKIDDLQEIIALLRSKDVGVALQFINMK.

It belongs to the YajQ family.

Its function is as follows. Nucleotide-binding protein. This Cytophaga hutchinsonii (strain ATCC 33406 / DSM 1761 / CIP 103989 / NBRC 15051 / NCIMB 9469 / D465) protein is Nucleotide-binding protein CHU_2278.